The primary structure comprises 473 residues: MKTDTPSLETPQAARLRRRQLIRQLLERDKTPLAILFMAAVVGTLVGLAAVAFDKGVAWLQNQRMGALVHTADNYPLLLTVAFLCSAVLAMFGYFLVRKYAPEAGGSGIPEIEGALEDQRPVRWWRVLPVKFFGGLGTLGGGMVLGREGPTVQIGGNIGRMVLDVFRLKGDEARHTLLATGAAAGLAAAFNAPLAGILFIIEEMRPQFRYTLISIKAVFIGVIMSTIMYRIFNHEVALIDVGKLSDAPLNTLWLYLILGIIFGIFGPIFNKWVLGMQDLLHRVHGGNITKWVLMGGAIGGLCGLLGFVAPATSGGGFNLIPIATAGNFSMGMLVFIFVARVITTLLCFSSGAPGGIFAPMLALGTVLGTAFGMVAVELFPQYHLEAGTFAIAGMGALLAASIRAPLTGIILVLEMTDNYQLILPMIITGLGATLLAQFTGGKPLYSAILARTLAKQEAEQLARSKAASASENT.

Over 1-32 the chain is Cytoplasmic; the sequence is MKTDTPSLETPQAARLRRRQLIRQLLERDKTP. A helical transmembrane segment spans residues 33–69; the sequence is LAILFMAAVVGTLVGLAAVAFDKGVAWLQNQRMGALV. Over 70-76 the chain is Periplasmic; the sequence is HTADNYP. The chain crosses the membrane as a helical span at residues 77 to 100; that stretch reads LLLTVAFLCSAVLAMFGYFLVRKY. A Selectivity filter part_1 motif is present at residues 106-110; sequence GSGIP. Position 107 (Ser107) interacts with chloride. The segment at residues 109–116 is an intramembrane region (helical); it reads IPEIEGAL. The Cytoplasmic segment spans residues 117–123; the sequence is EDQRPVR. Helical transmembrane passes span 124-141 and 148-166; these read WWRV…TLGG and EGPT…LDVF. The Selectivity filter part_2 motif lies at 146–150; sequence GREGP. The Cytoplasmic segment spans residues 167–176; it reads RLKGDEARHT. Intramembrane regions (helical) lie at residues 177 to 189 and 193 to 201; these read LLAT…LAAA and PLAGILFII. At 202-214 the chain is on the cytoplasmic side; sequence EEMRPQFRYTLIS. A helical transmembrane segment spans residues 215 to 232; the sequence is IKAVFIGVIMSTIMYRIF. Residues 233–252 are Periplasmic-facing; that stretch reads NHEVALIDVGKLSDAPLNTL. Residues 253–281 traverse the membrane as a helical segment; it reads WLYLILGIIFGIFGPIFNKWVLGMQDLLH. Over 282-287 the chain is Cytoplasmic; the sequence is RVHGGN. The helical transmembrane segment at 288 to 309 threads the bilayer; that stretch reads ITKWVLMGGAIGGLCGLLGFVA. The Periplasmic portion of the chain corresponds to 310–329; that stretch reads PATSGGGFNLIPIATAGNFS. A run of 2 helical transmembrane segments spans residues 330–349 and 355–376; these read MGML…LCFS and GIFA…MVAV. The short motif at 355–359 is the Selectivity filter part_3 element; the sequence is GIFAP. Chloride is bound by residues Ile356 and Phe357. Over 377–386 the chain is Periplasmic; that stretch reads ELFPQYHLEA. The helical intramembrane region spans 387 to 401; it reads GTFAIAGMGALLAAS. Positions 402–404 form an intramembrane region, note=Loop between two helices; that stretch reads IRA. Positions 405-416 form an intramembrane region, helical; sequence PLTGIILVLEMT. Residues 417–421 constitute an intramembrane region (note=Loop between two helices); sequence DNYQL. Residues 422 to 438 form a helical membrane-spanning segment; it reads ILPMIITGLGATLLAQF. Topologically, residues 439–473 are cytoplasmic; the sequence is TGGKPLYSAILARTLAKQEAEQLARSKAASASENT. Tyr445 serves as a coordination point for chloride.

This sequence belongs to the chloride channel (TC 2.A.49) family. ClcA subfamily. Homodimer.

The protein localises to the cell inner membrane. The catalysed reaction is 2 chloride(in) + H(+)(out) = 2 chloride(out) + H(+)(in). Its function is as follows. Proton-coupled chloride transporter. Functions as antiport system and exchanges two chloride ions for 1 proton. Probably acts as an electrical shunt for an outwardly-directed proton pump that is linked to amino acid decarboxylation, as part of the extreme acid resistance (XAR) response. This Escherichia coli O157:H7 protein is H(+)/Cl(-) exchange transporter ClcA.